Consider the following 137-residue polypeptide: Small ribosomal subunit protein uS12 (137 aa).

The segment at 1–55 (MPTINQLVRKPRKSKTKQSDSPALNRGFNSKKKQFTNLNSPQKRGVCTRVGTMTP) is disordered. Asp-102 bears the 3-methylthioaspartic acid mark. The tract at residues 118 to 137 (SGVDGRRQGRSLYGTKKPKN) is disordered.

It belongs to the universal ribosomal protein uS12 family. In terms of assembly, part of the 30S ribosomal subunit. Contacts proteins S8 and S17. May interact with IF1 in the 30S initiation complex.

Functionally, with S4 and S5 plays an important role in translational accuracy. In terms of biological role, interacts with and stabilizes bases of the 16S rRNA that are involved in tRNA selection in the A site and with the mRNA backbone. Located at the interface of the 30S and 50S subunits, it traverses the body of the 30S subunit contacting proteins on the other side and probably holding the rRNA structure together. The combined cluster of proteins S8, S12 and S17 appears to hold together the shoulder and platform of the 30S subunit. The protein is Small ribosomal subunit protein uS12 of Staphylococcus epidermidis (strain ATCC 35984 / DSM 28319 / BCRC 17069 / CCUG 31568 / BM 3577 / RP62A).